The following is a 474-amino-acid chain: PRAME family member 1 (474 aa).

One copy of the LRR 1; degenerate repeat lies at Arg-97–Cys-124. One copy of the LRR 2; degenerate repeat lies at His-179–Tyr-203. One copy of the LRR 3; degenerate repeat lies at Leu-204 to Glu-230. The stretch at Met-231–Arg-265 is one LRR 4; degenerate repeat. LRR repeat units follow at residues Leu-266–Leu-291, Gln-292–Lys-323, His-324–Ala-342, Ala-348–Arg-375, and Cys-376–His-400.

The protein belongs to the PRAME family.

The sequence is that of PRAME family member 1 from Homo sapiens (Human).